The sequence spans 138 residues: Probable prefoldin subunit 4 (138 aa).

This sequence belongs to the prefoldin subunit beta family. As to quaternary structure, heterohexamer of two PFD-alpha type and four PFD-beta type subunits.

Functionally, binds specifically to cytosolic chaperonin (c-CPN) and transfers target proteins to it. Binds to nascent polypeptide chain and promotes folding in an environment in which there are many competing pathways for nonnative proteins. The chain is Probable prefoldin subunit 4 from Drosophila melanogaster (Fruit fly).